The primary structure comprises 310 residues: Aspartate carbamoyltransferase catalytic subunit 3 (310 aa).

The carbamoyl phosphate site is built by R55 and T56. K85 is an L-aspartate binding site. Carbamoyl phosphate contacts are provided by R106, H134, and Q137. 2 residues coordinate L-aspartate: R167 and R228. Residues L266 and P267 each coordinate carbamoyl phosphate.

The protein belongs to the aspartate/ornithine carbamoyltransferase superfamily. ATCase family. Heterododecamer (2C3:3R2) of six catalytic PyrB chains organized as two trimers (C3), and six regulatory PyrI chains organized as three dimers (R2).

It catalyses the reaction carbamoyl phosphate + L-aspartate = N-carbamoyl-L-aspartate + phosphate + H(+). Its pathway is pyrimidine metabolism; UMP biosynthesis via de novo pathway; (S)-dihydroorotate from bicarbonate: step 2/3. Catalyzes the condensation of carbamoyl phosphate and aspartate to form carbamoyl aspartate and inorganic phosphate, the committed step in the de novo pyrimidine nucleotide biosynthesis pathway. This chain is Aspartate carbamoyltransferase catalytic subunit 3, found in Shewanella halifaxensis (strain HAW-EB4).